Reading from the N-terminus, the 288-residue chain is Intermediate transcription factor 3 small subunit (288 aa).

Belongs to the orthopoxvirus OPG134 family. Heterodimer of a 45 kDa (A23R) and a 32 kDa (A8R) subunit to form the virus intermediate transcription factor (VITF)-3.

In terms of biological role, acts with RNA polymerase to initiate transcription from intermediate gene promoters. The protein is Intermediate transcription factor 3 small subunit (OPG134) of Homo sapiens (Human).